Consider the following 192-residue polypeptide: HTH-type transcriptional repressor SCO4008 (192 aa).

The HTH tetR-type domain occupies 7-67; sequence EATKARIFEA…SVLEKKMLDL (61 aa). Residues 30–49 constitute a DNA-binding region (H-T-H motif); sequence RIDRIAAEARANKQLIYAYY.

As to quaternary structure, homodimer. Four dimers bind to the two operator sites.

With respect to regulation, binding of a wide range of cationic hydrophobic compounds to SCO4008 causes a decrease in DNA-binding, probably via allosteric conformational change of SCO4008. Probably regulates the expression of its own gene and the adjacent SCO4007 gene by binding to two operator sites in the SCO4007-SCO4008 intergenic region. This is HTH-type transcriptional repressor SCO4008 from Streptomyces coelicolor (strain ATCC BAA-471 / A3(2) / M145).